The primary structure comprises 84 residues: Tetrahydromethanopterin S-methyltransferase subunit G (84 aa).

A helical transmembrane segment spans residues 50–70 (IGILYGLVIGIILSYILPALI).

This sequence belongs to the MtrG family. As to quaternary structure, the complex is composed of 8 subunits; MtrA, MtrB, MtrC, MtrD, MtrE, MtrF, MtrG and MtrH.

The protein localises to the cell membrane. It catalyses the reaction 5-methyl-5,6,7,8-tetrahydromethanopterin + coenzyme M + 2 Na(+)(in) = 5,6,7,8-tetrahydromethanopterin + methyl-coenzyme M + 2 Na(+)(out). The protein operates within one-carbon metabolism; methanogenesis from CO(2); methyl-coenzyme M from 5,10-methylene-5,6,7,8-tetrahydromethanopterin: step 2/2. Functionally, part of a complex that catalyzes the formation of methyl-coenzyme M and tetrahydromethanopterin from coenzyme M and methyl-tetrahydromethanopterin. This is an energy-conserving, sodium-ion translocating step. The polypeptide is Tetrahydromethanopterin S-methyltransferase subunit G (Methanocaldococcus jannaschii (strain ATCC 43067 / DSM 2661 / JAL-1 / JCM 10045 / NBRC 100440) (Methanococcus jannaschii)).